The following is a 380-amino-acid chain: Reducing-end xylose-releasing exo-oligoxylanase Rex8A (380 aa).

E70 acts as the Proton donor in catalysis. D265 functions as the Proton acceptor in the catalytic mechanism.

This sequence belongs to the glycosyl hydrolase 8 (cellulase D) family.

It catalyses the reaction Hydrolysis of (1-&gt;4)-beta-D-xylose residues from the reducing end of oligosaccharides.. It functions in the pathway glycan degradation; xylan degradation. Involved in depolymerization of xylan, a major component of the lignocellulosic substrates. Acts as an exo-oligoxylanase that efficiently hydrolyzes xylooligosaccharides, releasing xylose from their reducing ends. Hydrolyzes xylooligomers of 3 to 6 xylose units to xylose and xylobiose. Besides linear xylooligosaccharides, also hydrolyzes branched xylooligomers, such as xylooligomers decorated with 4-O-methyl-D-glucuronic acid moieties. Its proposed role is the degradation of xylooligomers produced by the activity of extracellular xylanases once they have been transported inside cells. Shows minor activity on polymeric xylan (glucuronoxylan from beechwood). Is not active on cellooligosaccharides or cellulosic substrates, or on other polysaccharides such as pectin, polygalacturonic acid, laminarin, or lichenan. The protein is Reducing-end xylose-releasing exo-oligoxylanase Rex8A of Paenibacillus barcinonensis.